The chain runs to 107 residues: Nucleoid-associated protein BT_0257 (107 aa).

It belongs to the YbaB/EbfC family. In terms of assembly, homodimer.

It localises to the cytoplasm. It is found in the nucleoid. In terms of biological role, binds to DNA and alters its conformation. May be involved in regulation of gene expression, nucleoid organization and DNA protection. This Bartonella tribocorum (strain CIP 105476 / IBS 506) protein is Nucleoid-associated protein BT_0257.